A 219-amino-acid polypeptide reads, in one-letter code: Thiamine-phosphate synthase (219 aa).

Residues 44–48 (QFREK) and Asn79 contribute to the 4-amino-2-methyl-5-(diphosphooxymethyl)pyrimidine site. Mg(2+)-binding residues include Asp80 and Asp99. Ser117 provides a ligand contact to 4-amino-2-methyl-5-(diphosphooxymethyl)pyrimidine. 143–145 (TST) lines the 2-[(2R,5Z)-2-carboxy-4-methylthiazol-5(2H)-ylidene]ethyl phosphate pocket. Lys146 lines the 4-amino-2-methyl-5-(diphosphooxymethyl)pyrimidine pocket. 2-[(2R,5Z)-2-carboxy-4-methylthiazol-5(2H)-ylidene]ethyl phosphate contacts are provided by residues Gly175 and 195 to 196 (IS).

The protein belongs to the thiamine-phosphate synthase family. The cofactor is Mg(2+).

It carries out the reaction 2-[(2R,5Z)-2-carboxy-4-methylthiazol-5(2H)-ylidene]ethyl phosphate + 4-amino-2-methyl-5-(diphosphooxymethyl)pyrimidine + 2 H(+) = thiamine phosphate + CO2 + diphosphate. The enzyme catalyses 2-(2-carboxy-4-methylthiazol-5-yl)ethyl phosphate + 4-amino-2-methyl-5-(diphosphooxymethyl)pyrimidine + 2 H(+) = thiamine phosphate + CO2 + diphosphate. It catalyses the reaction 4-methyl-5-(2-phosphooxyethyl)-thiazole + 4-amino-2-methyl-5-(diphosphooxymethyl)pyrimidine + H(+) = thiamine phosphate + diphosphate. It participates in cofactor biosynthesis; thiamine diphosphate biosynthesis; thiamine phosphate from 4-amino-2-methyl-5-diphosphomethylpyrimidine and 4-methyl-5-(2-phosphoethyl)-thiazole: step 1/1. In terms of biological role, condenses 4-methyl-5-(beta-hydroxyethyl)thiazole monophosphate (THZ-P) and 2-methyl-4-amino-5-hydroxymethyl pyrimidine pyrophosphate (HMP-PP) to form thiamine monophosphate (TMP). The sequence is that of Thiamine-phosphate synthase from Bacillus thuringiensis (strain Al Hakam).